Consider the following 1125-residue polypeptide: tRNA (34-2'-O)-methyltransferase regulator WDR6 (1125 aa).

N-acetylmethionine is present on Met1. 17 WD repeats span residues 89 to 130, 155 to 197, 207 to 246, 256 to 294, 295 to 335, 346 to 384, 433 to 475, 489 to 528, 567 to 605, 611 to 650, 652 to 692, 725 to 765, 767 to 798, 860 to 905, 912 to 958, 982 to 1024, and 1047 to 1085; these read SKGL…GNVA, TDRC…PDNK, GHVG…VPGG, GHSA…QAFR, GHQG…YPGL, SRPG…WEQL, LFQG…TGKA, SKQR…FKKP, HGKQ…QPVL, RGMN…KLHI, NCGG…IRPN, EHPD…GAAH, LTAV…HPGL, TRYM…RILH, HHKR…DRGS, AHSC…PELE, and AHAA…PTFM.

This sequence belongs to the WD repeat WDR6 family. In terms of assembly, interacts with FTSJ1; the interaction is direct, and required for 2'-O-methylation of position 34 in substrate tRNAs. Interacts with IRS4. Interacts with STK11/LKB1. Expressed in hypothalamus, hippocampus, cerebrum cortex and cerebellum.

It localises to the cytoplasm. Its function is as follows. Together with methyltransferase FTSJ1, methylates the 2'-O-ribose of nucleotides at position 34 of the tRNA anticodon loop of substrate tRNAs. Required for the correct positioning of the substrate tRNA for methylation. Required to suppress amino acid starvation-induced autophagy. Enhances the STK11/LKB1-induced cell growth suppression activity. This chain is tRNA (34-2'-O)-methyltransferase regulator WDR6 (Wdr6), found in Rattus norvegicus (Rat).